The primary structure comprises 495 residues: Serine/threonine-protein phosphatase 2A regulatory subunit sur-6 (495 aa).

Positions 1 to 27 (MVMEVDEPAVAATTSQNQPQEHANDFD) are disordered. Residues 12–21 (ATTSQNQPQE) show a composition bias toward polar residues. 6 WD repeats span residues 64–103 (TEAD…KYVK), 130–171 (EIDE…RKIG), 215–253 (AHTY…ESFN), 264–304 (ELTE…LCDA), 323–361 (EIIA…QPVE), and 378–419 (ENDS…DAKT). The interval 439 to 459 (SAKRKRNNLSSSGETTEEDLS) is disordered. The stretch at 464-495 (QFDRKILHTAWHPKDNIIALAATNNLYIFSDV) is one WD 7 repeat.

Belongs to the phosphatase 2A regulatory subunit B family. In terms of assembly, part of a complex consisting of a common heterodimeric core enzyme, composed of catalytic subunit let-92 and constant regulatory subunit paa-1, that associates with a variety of regulatory subunits which confer distinct properties to the holoenzyme. Interacts with let-92.

Its subcellular location is the cytoplasm. Functionally, probable regulatory subunit of serine/threonine phosphatase let-92. Together with let-92 and constant regulatory subunit paa-1, positively regulates centriole duplication during early embryonic cell divisions by preventing the degradation of sas-5 and kinase zyg-1. In addition, during vulva development, may play a role with phosphatase let-92 and regulatory subunit paa-1 in the induction of vulva cell precursors by positively regulating let-60/Ras-MAP kinase signaling, probably by promoting lin-45 activation. In intestinal epithelial cells, may play a role in the late secretory pathway probably by regulating the exocyst, a protein complex involved in targeting secretory vesicles to the plasma membrane. The chain is Serine/threonine-protein phosphatase 2A regulatory subunit sur-6 from Caenorhabditis elegans.